A 277-amino-acid polypeptide reads, in one-letter code: NADPH-dependent 7-cyano-7-deazaguanine reductase (277 aa).

83-85 (VES) is a substrate binding site. 85–86 (SK) provides a ligand contact to NADPH. Residue C184 is the Thioimide intermediate of the active site. Residue D191 is the Proton donor of the active site. 223-224 (HE) provides a ligand contact to substrate. Residue 252–253 (RG) coordinates NADPH.

This sequence belongs to the GTP cyclohydrolase I family. QueF type 2 subfamily. As to quaternary structure, homodimer.

Its subcellular location is the cytoplasm. It catalyses the reaction 7-aminomethyl-7-carbaguanine + 2 NADP(+) = 7-cyano-7-deazaguanine + 2 NADPH + 3 H(+). It participates in tRNA modification; tRNA-queuosine biosynthesis. In terms of biological role, catalyzes the NADPH-dependent reduction of 7-cyano-7-deazaguanine (preQ0) to 7-aminomethyl-7-deazaguanine (preQ1). This Cupriavidus taiwanensis (strain DSM 17343 / BCRC 17206 / CCUG 44338 / CIP 107171 / LMG 19424 / R1) (Ralstonia taiwanensis (strain LMG 19424)) protein is NADPH-dependent 7-cyano-7-deazaguanine reductase.